A 260-amino-acid chain; its full sequence is uncharacterized protein (260 aa).

Positions 1 to 38 (MNWTREIEQYKQVVASYKLKMKRMEMKISDISEEKRQS) form a coiled coil.

This is an uncharacterized protein from Caenorhabditis elegans.